A 553-amino-acid chain; its full sequence is Cytochrome P450 86A22 (553 aa).

The helical transmembrane segment at 8–24 (MIVAIVAAYLLWFKSIT) threads the bilayer. Cys459 serves as a coordination point for heme.

The protein belongs to the cytochrome P450 family. Heme serves as cofactor. Mostly expressed in the developing stigma of floral buds. Weakly detected in leaves, stems and flowers.

Its subcellular location is the membrane. It catalyses the reaction (9Z)-octadecenoyl-CoA + reduced [NADPH--hemoprotein reductase] + O2 = (9Z)-18-hydroxyoctadecenoyl-CoA + oxidized [NADPH--hemoprotein reductase] + H2O + H(+). The catalysed reaction is (9Z,12Z)-octadecadienoyl-CoA + reduced [NADPH--hemoprotein reductase] + O2 = (9Z,12Z)-18-hydroxyoctadecadienoyl-CoA + oxidized [NADPH--hemoprotein reductase] + H2O + H(+). In terms of biological role, fatty acyl-CoA omega-hydroxylase essential for the production of omega-hydroxy fatty acids and the biosynthesis of triacylglycerol-/diacylglycerol-based estolide polyesters in the stigma. Substrate preference is 16:0-CoA &gt; 18:1-CoA &gt; 18:0-CoA. This Petunia hybrida (Petunia) protein is Cytochrome P450 86A22.